The sequence spans 411 residues: Probable peptidoglycan glycosyltransferase FtsW (411 aa).

Over 1 to 40 (MLERMLPFLGRKRDKAAADLPVRVGHSAPRNSRMLEYDQN) the chain is Cytoplasmic. Residues 41-61 (LVWVTLLLLAYGLVMVYSATI) traverse the membrane as a helical segment. Over 62–81 (SFHDSPRYAQWSPYHYFIRD) the chain is Periplasmic. A helical membrane pass occupies residues 82–102 (LFSIAAALLASWIVVQIPMAE). The Cytoplasmic segment spans residues 103 to 109 (LQKWSMR). A helical transmembrane segment spans residues 110-130 (FFFLSLIGLVLVLLPHIGKDV). The Periplasmic segment spans residues 131–136 (NGSKRW). A helical membrane pass occupies residues 137-157 (VVFPGGLNFQPSELVKLTALI). Residues 158–172 (YAADFMVRKQEVKQS) are Cytoplasmic-facing. A helical transmembrane segment spans residues 173-193 (LLKTFLPMMAVMMIVGVLLLA). At 194-196 (EPD) the chain is on the periplasmic side. Residues 197 to 217 (MGAFLVIASITLAILFLGGAN) form a helical membrane-spanning segment. Residues 218–219 (GK) lie on the Cytoplasmic side of the membrane. A helical membrane pass occupies residues 220–240 (LFSVFSVAVIGAFVLMIVLSP). Residues 241–298 (WRRDRIFAYLNPWSESNALGSAYQLSHALIAMGRGEWFGVGLGGSIEKLHYLPEAHTD) lie on the Periplasmic side of the membrane. Residues 299-319 (FLLAIIGEELGLVGVGVVIFA) form a helical membrane-spanning segment. Over 320-347 (FYWIVRRAFDIGRQALVLDRMYSALVAQ) the chain is Cytoplasmic. Residues 348-368 (GIGVWIGGQAFINIGVNLGLL) traverse the membrane as a helical segment. Over 369–374 (PTKGLT) the chain is Periplasmic. Residues 375-395 (LPLMSYGGSALLLNCMAIAVL) form a helical membrane-spanning segment. Residues 396-411 (LRVDFENRILMRGGHV) are Cytoplasmic-facing.

Belongs to the SEDS family. FtsW subfamily.

The protein resides in the cell inner membrane. It catalyses the reaction [GlcNAc-(1-&gt;4)-Mur2Ac(oyl-L-Ala-gamma-D-Glu-L-Lys-D-Ala-D-Ala)](n)-di-trans,octa-cis-undecaprenyl diphosphate + beta-D-GlcNAc-(1-&gt;4)-Mur2Ac(oyl-L-Ala-gamma-D-Glu-L-Lys-D-Ala-D-Ala)-di-trans,octa-cis-undecaprenyl diphosphate = [GlcNAc-(1-&gt;4)-Mur2Ac(oyl-L-Ala-gamma-D-Glu-L-Lys-D-Ala-D-Ala)](n+1)-di-trans,octa-cis-undecaprenyl diphosphate + di-trans,octa-cis-undecaprenyl diphosphate + H(+). It participates in cell wall biogenesis; peptidoglycan biosynthesis. Peptidoglycan polymerase that is essential for cell division. This is Probable peptidoglycan glycosyltransferase FtsW from Thiomonas intermedia (strain K12) (Thiobacillus intermedius).